A 134-amino-acid chain; its full sequence is Large ribosomal subunit protein uL16c (134 aa).

The protein belongs to the universal ribosomal protein uL16 family. Part of the 50S ribosomal subunit.

The protein localises to the plastid. It is found in the chloroplast. The chain is Large ribosomal subunit protein uL16c from Pinus koraiensis (Korean pine).